A 246-amino-acid chain; its full sequence is Phosphatidylserine decarboxylase proenzyme (246 aa).

The Schiff-base intermediate with substrate; via pyruvic acid role is filled by S204. Pyruvic acid (Ser); by autocatalysis is present on S204.

It belongs to the phosphatidylserine decarboxylase family. PSD-A subfamily. In terms of assembly, heterodimer of a large membrane-associated beta subunit and a small pyruvoyl-containing alpha subunit. It depends on pyruvate as a cofactor. In terms of processing, is synthesized initially as an inactive proenzyme. Formation of the active enzyme involves a self-maturation process in which the active site pyruvoyl group is generated from an internal serine residue via an autocatalytic post-translational modification. Two non-identical subunits are generated from the proenzyme in this reaction, and the pyruvate is formed at the N-terminus of the alpha chain, which is derived from the carboxyl end of the proenzyme. The post-translation cleavage follows an unusual pathway, termed non-hydrolytic serinolysis, in which the side chain hydroxyl group of the serine supplies its oxygen atom to form the C-terminus of the beta chain, while the remainder of the serine residue undergoes an oxidative deamination to produce ammonia and the pyruvoyl prosthetic group on the alpha chain.

The protein resides in the cell membrane. The catalysed reaction is a 1,2-diacyl-sn-glycero-3-phospho-L-serine + H(+) = a 1,2-diacyl-sn-glycero-3-phosphoethanolamine + CO2. It participates in phospholipid metabolism; phosphatidylethanolamine biosynthesis; phosphatidylethanolamine from CDP-diacylglycerol: step 2/2. Its function is as follows. Catalyzes the formation of phosphatidylethanolamine (PtdEtn) from phosphatidylserine (PtdSer). This Zymomonas mobilis subsp. mobilis (strain ATCC 31821 / ZM4 / CP4) protein is Phosphatidylserine decarboxylase proenzyme.